The following is a 115-amino-acid chain: Beta-2-microglobulin (115 aa).

The first 16 residues, 1-16, serve as a signal peptide directing secretion; it reads MKIALVLLSLLALTLA. The 92-residue stretch at 22–113 folds into the Ig-like C1-type domain; it reads PPVVKVYTAE…GNPSKKYRLD (92 aa).

Belongs to the beta-2-microglobulin family. In terms of assembly, heterodimer of an alpha chain and a beta chain. Beta-2-microglobulin is the beta-chain of major histocompatibility complex class I molecules.

Its subcellular location is the secreted. Component of the class I major histocompatibility complex (MHC). Involved in the presentation of peptide antigens to the immune system. This Xenopus laevis (African clawed frog) protein is Beta-2-microglobulin (b2m).